The chain runs to 387 residues: Alkanesulfonate monooxygenase (387 aa).

It belongs to the SsuD family.

It catalyses the reaction an alkanesulfonate + FMNH2 + O2 = an aldehyde + FMN + sulfite + H2O + 2 H(+). In terms of biological role, catalyzes the desulfonation of aliphatic sulfonates. This is Alkanesulfonate monooxygenase from Cupriavidus pinatubonensis (strain JMP 134 / LMG 1197) (Cupriavidus necator (strain JMP 134)).